The chain runs to 270 residues: Eukaryotic translation initiation factor 3 subunit G-1 (270 aa).

Residues alanine 189–proline 267 form the RRM domain.

This sequence belongs to the eIF-3 subunit G family. As to quaternary structure, component of the eukaryotic translation initiation factor 3 (eIF-3) complex. The eIF-3 complex interacts with pix.

It is found in the cytoplasm. Functionally, RNA-binding component of the eukaryotic translation initiation factor 3 (eIF-3) complex, which is involved in protein synthesis of a specialized repertoire of mRNAs and, together with other initiation factors, stimulates binding of mRNA and methionyl-tRNAi to the 40S ribosome. The eIF-3 complex specifically targets and initiates translation of a subset of mRNAs involved in cell proliferation. This subunit can bind 18S rRNA. In Drosophila ananassae (Fruit fly), this protein is Eukaryotic translation initiation factor 3 subunit G-1.